The following is a 1120-amino-acid chain: ELKS/Rab6-interacting/CAST family member 1 (1120 aa).

Positions 1–54 are disordered; it reads MYGSARSVGKVEPSSQSPGRSPRLPRSPRLGHRRTNSTGGSSGNSVGGGSGKTL. K10 is subject to N6-acetyllysine. Low complexity predominate over residues 13 to 28; sequence PSSQSPGRSPRLPRSP. 3 positions are modified to phosphoserine: S17, S21, and S37. At T38 the chain carries Phosphothreonine. Over residues 40–51 the composition is skewed to gly residues; it reads GSSGNSVGGGSG. S55, S75, S94, S824, L965, and S1009 each carry phosphoserine. A coiled-coil region spans residues 144 to 992; the sequence is RQARDNTIMD…RMKLMADNYE (849 aa). Positions 801–824 are enriched in basic and acidic residues; sequence KHKEQVEKKKSAQMLEEARRREDS. Residues 801–840 form a disordered region; that stretch reads KHKEQVEKKKSAQMLEEARRREDSLSDSSQQLQDSLRKKD. At T1050 the chain carries Phosphothreonine. Residues 1050–1112 enclose the FIP-RBD domain; it reads TPPASYNADG…DHCPDILEQV (63 aa). The stretch at 1060 to 1104 forms a coiled coil; that stretch reads EQAAWENELQQMTQEQLQNELEKVEGDNAELQEFANTILQQIADH.

Interacts with the GTB-bound forms of RAB6A isoform 1 and isoform 2 and with RAB6B. The interaction was strongest with RAB6B, followed by RAB6A isoform 2 and weakest with RAB6A isoform 1. Part of a complex with CHUK, IKBKB and IKBKG. Interacts with CHUK, IKBKB and IKBKG. The interaction with IKBKG is independent of CHUK and IKBKB. Interacts with NFKBIA. Isoform 2 interacts through its C-terminus with the PDZ domains of RIMS1 and RIMS2. Interacts with ERC2/CAST1. Interacts with SDCCAG8. Part of a cortical microtubule stabilization complex (CMSC) composed of KANK1, PPFIA1, PPFIBP1, ERC1/ELKS, PHLDB2/LL5beta, CLASPs, KIF21A and possibly additional interactors; within CMSCs KANK1 and PHLDB2/LL5beta appear to be the core components for targeting of microtubule-binding proteins KIF21A and CLASPs, whereas PPFIA1, PPFIBP1 and ERC1/ELKS serve as scaffolds for protein clustering. As to expression, widely expressed.

Its subcellular location is the cytoplasm. It localises to the cytoskeleton. The protein localises to the microtubule organizing center. The protein resides in the centrosome. It is found in the membrane. Its subcellular location is the golgi apparatus membrane. It localises to the presynaptic active zone. The protein localises to the cell projection. The protein resides in the podosome. In terms of biological role, regulatory subunit of the IKK complex. Probably recruits IkappaBalpha/NFKBIA to the complex. May be involved in the organization of the cytomatrix at the nerve terminals active zone (CAZ) which regulates neurotransmitter release. May be involved in vesicle trafficking at the CAZ. May be involved in Rab-6 regulated endosomes to Golgi transport. The polypeptide is ELKS/Rab6-interacting/CAST family member 1 (Mus musculus (Mouse)).